Reading from the N-terminus, the 251-residue chain is MSFTVVIPARYQSTRLPGKPLADIAGKPMVQWVYEQAIQAGAQDVIIATDDQRVADAVAVFGGKVCMTSPNHESGTERLAEVVQLMGIADDHIVVNVQGDEPLIPPSIIRQVAENLAASSAPMATLGVAITSEEEVFNPNAVKVVTDKEGYALYFSRATIPWDRDAFARGEVLTEHSLMRHIGIYAYRAGFINTYVNWQPSSLEKIECLEQLRVLWYGEKIHVELAKEAPPAGVDTPEDLELVRELIAAKS.

This sequence belongs to the KdsB family.

The protein resides in the cytoplasm. It carries out the reaction 3-deoxy-alpha-D-manno-oct-2-ulosonate + CTP = CMP-3-deoxy-beta-D-manno-octulosonate + diphosphate. It participates in nucleotide-sugar biosynthesis; CMP-3-deoxy-D-manno-octulosonate biosynthesis; CMP-3-deoxy-D-manno-octulosonate from 3-deoxy-D-manno-octulosonate and CTP: step 1/1. The protein operates within bacterial outer membrane biogenesis; lipopolysaccharide biosynthesis. Functionally, activates KDO (a required 8-carbon sugar) for incorporation into bacterial lipopolysaccharide in Gram-negative bacteria. The polypeptide is 3-deoxy-manno-octulosonate cytidylyltransferase (Vibrio vulnificus (strain CMCP6)).